Reading from the N-terminus, the 479-residue chain is Cyclin-dependent kinase F-1 (479 aa).

The Protein kinase domain occupies 21–418 (YEIFERVGSG…TMEMLNDKYL (398 aa)). Residues 27 to 35 (VGSGAYADV) and lysine 50 each bind ATP. At tyrosine 32 the chain carries Phosphotyrosine. Catalysis depends on aspartate 146, which acts as the Proton acceptor. 3 positions are modified to phosphoserine: serine 179, serine 208, and serine 247. The interval 187 to 221 (KLEDKDGETSEPPEVIPDYENSPRQGSDGQEREAM) is disordered. Threonine 290 carries the phosphothreonine modification. The segment at 434–479 (PTMSGPDEDSPRKWNDYREMDSDSDFDGFGPMNVKPTSSGFTIEFP) is disordered. A compositionally biased stretch (basic and acidic residues) spans 442-454 (DSPRKWNDYREMD). Residues 468–479 (KPTSSGFTIEFP) show a composition bias toward polar residues.

It belongs to the protein kinase superfamily. CMGC Ser/Thr protein kinase family. CDC2/CDKX subfamily. Highly expressed in suspension cell culture. Expressed at low levels in all plant organs.

The catalysed reaction is L-seryl-[protein] + ATP = O-phospho-L-seryl-[protein] + ADP + H(+). The enzyme catalyses L-threonyl-[protein] + ATP = O-phospho-L-threonyl-[protein] + ADP + H(+). It catalyses the reaction [DNA-directed RNA polymerase] + ATP = phospho-[DNA-directed RNA polymerase] + ADP + H(+). CDK-activating kinase that modulates CDKD-2 and CDKD-3 activities by phosphorylation of the T-loop. Activates CDKD-2 C-terminal domain (CTD) kinase activity. Activates CDKA-1 probably by phosphorylation. Possesses a CDK kinase activity independently of association with cyclin CYCH1-1. Phosphorylates the CTD of the large subunit of RNA polymerase II. The polypeptide is Cyclin-dependent kinase F-1 (CDKF-1) (Arabidopsis thaliana (Mouse-ear cress)).